A 436-amino-acid chain; its full sequence is MGQVLPLVTRQGDRIAIVSGLRTPFARQATAFHGIPAVDLGKMVVGELLARSEIPAEVIEQLVFGQVVQMPEAPNIAREIVLGTGMNVHTDAYSVSRACATSFQAIANVAESLMAGTIRAGIAGGADSSSVLPIGVSKKLARVLVDVNKARTMSQRLKLFSRLRLRDLMPVPPAVAEYSTGLRMGDTAEQMAKTYGITREQQDALAHRSHQRAAQAWSDGKLKEEVMTAFIPPYKQPLVEDNNIRGNSSLADYAKLRPAFDRKHGTVTAANSTPLTDGAAAVILMTESRAKELGLVPLGYLRSYAFTAIDVWQDMLLGPAWSTPLALERAGLTMSDLTLIDMHEAFAAQTLANIQLLGSERFARDVLGRAHATGEVDESKFNVLGGSIAYGHPFAATGARMITQTLHELRRRGGGFGLVTACAAGGLGAAMVVEAE.

The Acyl-thioester intermediate role is filled by Cys-99. Catalysis depends on proton acceptor residues His-392 and Cys-422.

The protein belongs to the thiolase-like superfamily. Thiolase family. In terms of assembly, heterotetramer of two alpha chains (FadJ) and two beta chains (FadI).

It localises to the cytoplasm. The catalysed reaction is an acyl-CoA + acetyl-CoA = a 3-oxoacyl-CoA + CoA. The protein operates within lipid metabolism; fatty acid beta-oxidation. In terms of biological role, catalyzes the final step of fatty acid oxidation in which acetyl-CoA is released and the CoA ester of a fatty acid two carbons shorter is formed. The sequence is that of 3-ketoacyl-CoA thiolase from Escherichia coli O7:K1 (strain IAI39 / ExPEC).